A 562-amino-acid chain; its full sequence is Dihydroxy-acid dehydratase (562 aa).

Cysteine 51 is a binding site for [2Fe-2S] cluster. Mg(2+) is bound at residue aspartate 83. Cysteine 124 is a binding site for [2Fe-2S] cluster. Aspartate 125 and lysine 126 together coordinate Mg(2+). N6-carboxylysine is present on lysine 126. Cysteine 196 contacts [2Fe-2S] cluster. Residue glutamate 448 participates in Mg(2+) binding. Residue serine 474 is the Proton acceptor of the active site.

This sequence belongs to the IlvD/Edd family. In terms of assembly, homodimer. [2Fe-2S] cluster is required as a cofactor. It depends on Mg(2+) as a cofactor.

It catalyses the reaction (2R)-2,3-dihydroxy-3-methylbutanoate = 3-methyl-2-oxobutanoate + H2O. The catalysed reaction is (2R,3R)-2,3-dihydroxy-3-methylpentanoate = (S)-3-methyl-2-oxopentanoate + H2O. It participates in amino-acid biosynthesis; L-isoleucine biosynthesis; L-isoleucine from 2-oxobutanoate: step 3/4. It functions in the pathway amino-acid biosynthesis; L-valine biosynthesis; L-valine from pyruvate: step 3/4. In terms of biological role, functions in the biosynthesis of branched-chain amino acids. Catalyzes the dehydration of (2R,3R)-2,3-dihydroxy-3-methylpentanoate (2,3-dihydroxy-3-methylvalerate) into 2-oxo-3-methylpentanoate (2-oxo-3-methylvalerate) and of (2R)-2,3-dihydroxy-3-methylbutanoate (2,3-dihydroxyisovalerate) into 2-oxo-3-methylbutanoate (2-oxoisovalerate), the penultimate precursor to L-isoleucine and L-valine, respectively. This Pyrobaculum aerophilum (strain ATCC 51768 / DSM 7523 / JCM 9630 / CIP 104966 / NBRC 100827 / IM2) protein is Dihydroxy-acid dehydratase.